The primary structure comprises 31 residues: Photosystem II reaction center protein T (31 aa).

Residues 3–23 (SVAYIIVLAMALSVLFFAIAF) form a helical membrane-spanning segment.

This sequence belongs to the PsbT family. As to quaternary structure, PSII is composed of 1 copy each of membrane proteins PsbA, PsbB, PsbC, PsbD, PsbE, PsbF, PsbH, PsbI, PsbJ, PsbK, PsbL, PsbM, PsbT, PsbX, PsbY, PsbZ, Psb30/Ycf12, peripheral proteins PsbO, CyanoQ (PsbQ), PsbU, PsbV and a large number of cofactors. It forms dimeric complexes.

Its subcellular location is the cellular thylakoid membrane. Functionally, found at the monomer-monomer interface of the photosystem II (PS II) dimer, plays a role in assembly and dimerization of PSII. PSII is a light-driven water plastoquinone oxidoreductase, using light energy to abstract electrons from H(2)O, generating a proton gradient subsequently used for ATP formation. This chain is Photosystem II reaction center protein T, found in Picosynechococcus sp. (strain ATCC 27264 / PCC 7002 / PR-6) (Agmenellum quadruplicatum).